A 348-amino-acid chain; its full sequence is MSTNHIQPLLDLLYQGKSLSREQAFEIFSALIRGEMSEATMAGMLVALKMRGETIDEISGAADAMRAAAKTFPYSNGDSLGNGIVDIVGTGGDGFNTINISTTAAFVAAAAGAKVAKHGNRSVSSKSGSSDLLAQFGIDLTMSPDTASRCLDALNLCFLFAPHYHGGVKHAGPVRQALKTRTLFNVLGPLINPARPEFMLLGVYSPELVLPIAKVLKALGTKRAMVVHGSGLDEVALHGNTQVAELKDGDIIEYQLTPADLGVPLAQISELEGGEPAQNALITEAILRGRGTDAHANAVAINAGCALYVCGIADSVKTGTLLALSTIQSGKAFELLSQLAKVSSETKE.

5-phospho-alpha-D-ribose 1-diphosphate is bound by residues Gly-89, 92 to 93 (GD), Thr-97, 99 to 102 (NIST), 117 to 125 (KHGNRSVSS), and Ser-129. Gly-89 contributes to the anthranilate binding site. Ser-101 is a Mg(2+) binding site. Asn-120 contributes to the anthranilate binding site. Arg-175 is a binding site for anthranilate. 2 residues coordinate Mg(2+): Asp-233 and Glu-234.

The protein belongs to the anthranilate phosphoribosyltransferase family. As to quaternary structure, homodimer. The cofactor is Mg(2+).

It carries out the reaction N-(5-phospho-beta-D-ribosyl)anthranilate + diphosphate = 5-phospho-alpha-D-ribose 1-diphosphate + anthranilate. The protein operates within amino-acid biosynthesis; L-tryptophan biosynthesis; L-tryptophan from chorismate: step 2/5. Functionally, catalyzes the transfer of the phosphoribosyl group of 5-phosphorylribose-1-pyrophosphate (PRPP) to anthranilate to yield N-(5'-phosphoribosyl)-anthranilate (PRA). The polypeptide is Anthranilate phosphoribosyltransferase (Shewanella putrefaciens (strain CN-32 / ATCC BAA-453)).